Reading from the N-terminus, the 91-residue chain is Pyruvate kinase (91 aa).

R48 is a binding site for substrate. K(+) contacts are provided by N50, S52, D82, and T83. An ATP-binding site is contributed by 50 to 53 (NFSH). R89 lines the ATP pocket.

The protein belongs to the pyruvate kinase family. As to quaternary structure, homotetramer. The cofactor is Mg(2+). It depends on K(+) as a cofactor.

It catalyses the reaction pyruvate + ATP = phosphoenolpyruvate + ADP + H(+). It functions in the pathway carbohydrate degradation; glycolysis; pyruvate from D-glyceraldehyde 3-phosphate: step 5/5. The sequence is that of Pyruvate kinase from Leishmania braziliensis.